The sequence spans 307 residues: Acyl transferase (307 aa).

Residues S116, D213, and H243 each act as charge relay system in the active site.

It belongs to the LuxD family.

The protein operates within lipid metabolism; fatty acid reduction for biolumincescence. Acyl transferase is part of the fatty acid reductase system required for aldehyde biosynthesis; it produces fatty acids for the luminescent reaction. The chain is Acyl transferase from Aliivibrio fischeri (strain MJ11) (Vibrio fischeri).